The following is a 393-amino-acid chain: Methylthioribose kinase (393 aa).

ATP contacts are provided by residues N38, K53, and 107-109 (EDL). D225 lines the substrate pocket. 242–244 (DPE) provides a ligand contact to ATP. R332 provides a ligand contact to substrate.

Belongs to the methylthioribose kinase family. Homodimer.

It catalyses the reaction 5-(methylsulfanyl)-D-ribose + ATP = 5-(methylsulfanyl)-alpha-D-ribose 1-phosphate + ADP + H(+). It participates in amino-acid biosynthesis; L-methionine biosynthesis via salvage pathway; S-methyl-5-thio-alpha-D-ribose 1-phosphate from S-methyl-5'-thioadenosine (hydrolase route): step 2/2. Catalyzes the phosphorylation of methylthioribose into methylthioribose-1-phosphate. This is Methylthioribose kinase from Bacillus cereus (strain AH187).